We begin with the raw amino-acid sequence, 144 residues long: Cytochrome c oxidase subunit 4 isoform 1, mitochondrial (144 aa).

The Mitochondrial matrix portion of the chain corresponds to 1 to 73; sequence SVVKSEDFSL…SFAEMNRGSN (73 aa). K4 bears the N6-acetyllysine; alternate mark. An N6-succinyllysine; alternate modification is found at K4. The residue at position 28 (K28) is an N6-acetyllysine. 2 positions are modified to phosphoserine: S31 and S33. K35 carries the post-translational modification N6-acetyllysine; alternate. K35 carries the N6-succinyllysine; alternate modification. Residue K42 is modified to N6-acetyllysine. A helical membrane pass occupies residues 74-99; it reads EWKTVVGGAMFFIGFTALVIMWQKHY. Over 100–144 the chain is Mitochondrial intermembrane; that stretch reads VYGPLPQSFDKEWVAKQTKRMLDMKVNPIQGLASKWDYEKNEWKK.

The protein belongs to the cytochrome c oxidase IV family. In terms of assembly, component of the cytochrome c oxidase (complex IV, CIV), a multisubunit enzyme composed of 14 subunits. The complex is composed of a catalytic core of 3 subunits MT-CO1, MT-CO2 and MT-CO3, encoded in the mitochondrial DNA, and 11 supernumerary subunits COX4I, COX5A, COX5B, COX6A, COX6B, COX6C, COX7A, COX7B, COX7C, COX8 and NDUFA4, which are encoded in the nuclear genome. The complex exists as a monomer or a dimer and forms supercomplexes (SCs) in the inner mitochondrial membrane with NADH-ubiquinone oxidoreductase (complex I, CI) and ubiquinol-cytochrome c oxidoreductase (cytochrome b-c1 complex, complex III, CIII), resulting in different assemblies (supercomplex SCI(1)III(2)IV(1) and megacomplex MCI(2)III(2)IV(2)). Interacts with PHB2; the interaction decreases in absence of SPHK2. Interacts with AFG1L. Interacts with ABCB7; this interaction allows the regulation of cellular iron homeostasis and cellular reactive oxygen species (ROS) levels in cardiomyocytes. Interacts with FLVCR2; this interaction occurs in the absence of heme and is disrupted upon heme binding. Interacts with IRGC.

It is found in the mitochondrion inner membrane. The protein operates within energy metabolism; oxidative phosphorylation. Functionally, component of the cytochrome c oxidase, the last enzyme in the mitochondrial electron transport chain which drives oxidative phosphorylation. The respiratory chain contains 3 multisubunit complexes succinate dehydrogenase (complex II, CII), ubiquinol-cytochrome c oxidoreductase (cytochrome b-c1 complex, complex III, CIII) and cytochrome c oxidase (complex IV, CIV), that cooperate to transfer electrons derived from NADH and succinate to molecular oxygen, creating an electrochemical gradient over the inner membrane that drives transmembrane transport and the ATP synthase. Cytochrome c oxidase is the component of the respiratory chain that catalyzes the reduction of oxygen to water. Electrons originating from reduced cytochrome c in the intermembrane space (IMS) are transferred via the dinuclear copper A center (CU(A)) of subunit 2 and heme A of subunit 1 to the active site in subunit 1, a binuclear center (BNC) formed by heme A3 and copper B (CU(B)). The BNC reduces molecular oxygen to 2 water molecules using 4 electrons from cytochrome c in the IMS and 4 protons from the mitochondrial matrix. The protein is Cytochrome c oxidase subunit 4 isoform 1, mitochondrial (COX4I1) of Pan troglodytes (Chimpanzee).